We begin with the raw amino-acid sequence, 232 residues long: LexA repressor (232 aa).

The segment at residues 36–56 is a DNA-binding region (H-T-H motif); the sequence is IREIGDAAGLQSTSSVAYQLK. The span at 62-86 shows a compositional bias: basic and acidic residues; that stretch reads GFLRRDPNKPRAVDVRHLPETDNRT. Positions 62-107 are disordered; sequence GFLRRDPNKPRAVDVRHLPETDNRTKAGPKAKARPTAGASPQPELA. Catalysis depends on for autocatalytic cleavage activity residues S156 and K193.

This sequence belongs to the peptidase S24 family. As to quaternary structure, homodimer.

It catalyses the reaction Hydrolysis of Ala-|-Gly bond in repressor LexA.. Functionally, represses a number of genes involved in the response to DNA damage (SOS response), including recA and lexA. In the presence of single-stranded DNA, RecA interacts with LexA causing an autocatalytic cleavage which disrupts the DNA-binding part of LexA, leading to derepression of the SOS regulon and eventually DNA repair. This Corynebacterium efficiens (strain DSM 44549 / YS-314 / AJ 12310 / JCM 11189 / NBRC 100395) protein is LexA repressor.